The sequence spans 375 residues: F-box/kelch-repeat protein At4g39240 (375 aa).

Low complexity predominate over residues 1–15; it reads MPFSAASSSSVSSIA. The interval 1–27 is disordered; sequence MPFSAASSSSVSSIAEEPPPKKQHDPS. Positions 31–77 constitute an F-box domain; sequence SSYLLLLPDEIILNCLARLPKCYYPVISLVSKTFRRLIASPEIYVER. Kelch repeat units follow at residues 140–186, 187–232, and 275–321; these read EIYV…FFDG, KLYV…RSFA, and KIYT…GNLA.

In Arabidopsis thaliana (Mouse-ear cress), this protein is F-box/kelch-repeat protein At4g39240.